Reading from the N-terminus, the 811-residue chain is MDQDYEELRAKFTKIGLNETTVKDTLKNKKLSSSLNKVIEETNVGSSGCDRTIGNLLFTLANASLKQKDPKSNAHEAFIASKIVSGDLKTNLQVNAAITYCKDKDTIDESEFDKETGVGVVLTPEQIEQLVGDYVAENKSKILEQRYQLLNPSASALRQHALLKWAPQLEVKQTLDRKFLELLGPKTEQDAAAGKKKGAKAKNSKQKTVDSGKAKEQKIVSEQSKKYNMFEEGFLAKLHKPGGNTQLIPERMKEHLQATGGGVVTRFPPEPNGYLHIGHSKAIAVNFGFARYHNGVCYLRFDDTNPEAEEERYFESIKDLVAWLGFQPYKITYSSDYFDKLYELAEELIKRDKAYVCHCTDAEIKKARGGEERGPRYACVHRDRPIEESLLEFRNMRDGKYQPKEAILRMKQDLSDGNPQMWDLIAYRVLNSPHPRTGDKWKIYPTYDFTHCLVDSFENISHSLCTTEFILSRVSYEWLCNALEVYCPAQREYGRLNVVGTLMSKRKIMKLVKEGYVHGWNDPRLYTLVALRRRGVPPGAILEFVSEVGVTTAVSNIEVARFENCVRKFLENSVPRLMFLPDPIKVTLENLDDSYREQIEIPFNPKDPSMGSRSAFLTKHIYIDRSDFREEASSDFFRLTLGQPVGLFRASHPVVAKRVVKNDEGEPIEIIAEYDASSSKKPKTFIQWVSRDKESNSPVLIAETRLFNNLFKCDNPAALKEQELAAQLNPESEVVLKNSIIEPGIYDLIKSAPWPKTDSSAGVDKAENPESVRFQAMRVGYFCLDEDTKKPNHLVLNRIVSLREDSAKNKN.

The disordered stretch occupies residues 190–217 (DAAAGKKKGAKAKNSKQKTVDSGKAKEQ). A compositionally biased stretch (basic residues) spans 194–205 (GKKKGAKAKNSK). Basic and acidic residues predominate over residues 207-217 (KTVDSGKAKEQ). The 'HIGH' region motif lies at 269–279 (PEPNGYLHIGH). ATP is bound by residues 270–272 (EPN) and 276–282 (HIGHSKA). L-glutamine is bound by residues aspartate 302 and tyrosine 447. Residues threonine 466, 495 to 496 (RL), and 503 to 505 (MSK) contribute to the ATP site. Positions 502–506 (LMSKR) match the 'KMSKS' region motif.

It belongs to the class-I aminoacyl-tRNA synthetase family.

It is found in the cytoplasm. The enzyme catalyses tRNA(Gln) + L-glutamine + ATP = L-glutaminyl-tRNA(Gln) + AMP + diphosphate. This chain is Probable glutamine--tRNA ligase (qrs1), found in Schizosaccharomyces pombe (strain 972 / ATCC 24843) (Fission yeast).